Consider the following 810-residue polypeptide: Phenylalanine--tRNA ligase beta subunit (810 aa).

The 116-residue stretch at 39 to 154 (APPTEKIVVG…EGTPVGQDIR (116 aa)) folds into the tRNA-binding domain. The B5 domain occupies 405–480 (PQRAPVSMRA…RIYGFEKIPA (76 aa)). Residues Asp458, Asp464, Glu467, and Glu468 each contribute to the Mg(2+) site. Residues 707 to 809 (SKFPPVRRDI…MARVYGARLR (103 aa)) form the FDX-ACB domain.

The protein belongs to the phenylalanyl-tRNA synthetase beta subunit family. Type 1 subfamily. In terms of assembly, tetramer of two alpha and two beta subunits. The cofactor is Mg(2+).

Its subcellular location is the cytoplasm. The enzyme catalyses tRNA(Phe) + L-phenylalanine + ATP = L-phenylalanyl-tRNA(Phe) + AMP + diphosphate + H(+). This is Phenylalanine--tRNA ligase beta subunit from Burkholderia mallei (strain ATCC 23344).